The sequence spans 491 residues: MTTDINGTALAVFIFFFVLVTVMGFVASRWRKPETLAHIDEWGLGGRNFGTWITWFLVGGDFYTAYTVIAVPALVYTVGAYGFFALPYTIVVYPFVFMVMPVLWKRAKDFGYVTAGDVVHGQYGSRGLELAVAATGVIATMPYIALQLVGMTAVLKALGLHGELPLAIAFIVLALYTYSAGLRAPALIAFVKDIMIYIVVIAAVALIPSKLGGYANVFASADAAFQAKGSGNLLLGGNQYVAYATLALGSALAAFMYPHTLTGIFASNSGKTIRKNAIMLPAYTLLLGLLALLGYMGHAANLKLDSANDVVPTLFKTLFSGWFSGFAFAAIAIGALVPAAVMSIGAANLFTRNFWKAYVDPDVSDAGEAKVAKITSLVVKVGALLVIIFLPTQFALDLQLLGGIWILQTLPALVFGLYTNWFRAPGLLAGWFVGFGGGTFLVWDAGWKPLHLISLGGEPFTVYTGLLALAANIAVAVVVNALLPAKAPVRA.

13 helical membrane-spanning segments follow: residues 7–27, 55–75, 83–103, 130–150, 157–177, 187–207, 246–266, 277–297, 322–342, 374–396, 400–422, 427–447, and 465–485; these read GTAL…GFVA, WFLV…PALV, FFAL…MPVL, LAVA…QLVG, ALGL…ALYT, LIAF…VALI, LALG…GIFA, AIML…GYMG, WFSG…AAVM, ITSL…QFAL, LLGG…TNWF, LLAG…DAGW, and GLLA…LLPA.

Belongs to the sodium:solute symporter (SSF) (TC 2.A.21) family.

The protein localises to the cell membrane. Inhibited by CCCP, but is apparently not affected by the concentration of sodium. Its function is as follows. Low-affinity transporter of alanine and high-affinity transporter of lactate and pyruvate. Can also transport other monocarboxylates such as propionate, butyrate, alpha-hydroxybutyrate or acetate. May be proton coupled. Required for optimal growth on alanine or pyruvate and ammonia. The polypeptide is Monocarboxylate transport permease protein (Rhizobium johnstonii (strain DSM 114642 / LMG 32736 / 3841) (Rhizobium leguminosarum bv. viciae)).